The primary structure comprises 143 residues: NADH-quinone oxidoreductase subunit A (143 aa).

Transmembrane regions (helical) follow at residues 8-28 (FGNVFAFLALGIVFVAGGYLT), 63-83 (FYVVALIFIIFDVEVVFLYPW), and 90-110 (LGVFALVEVLVFAGILILGLV).

This sequence belongs to the complex I subunit 3 family. NDH-1 is composed of 14 different subunits. Subunits NuoA, H, J, K, L, M, N constitute the membrane sector of the complex.

It localises to the cell inner membrane. It carries out the reaction a quinone + NADH + 5 H(+)(in) = a quinol + NAD(+) + 4 H(+)(out). Functionally, NDH-1 shuttles electrons from NADH, via FMN and iron-sulfur (Fe-S) centers, to quinones in the respiratory chain. The immediate electron acceptor for the enzyme in this species is believed to be a menaquinone. Couples the redox reaction to proton translocation (for every two electrons transferred, four hydrogen ions are translocated across the cytoplasmic membrane), and thus conserves the redox energy in a proton gradient. The protein is NADH-quinone oxidoreductase subunit A of Chlorobium phaeobacteroides (strain DSM 266 / SMG 266 / 2430).